The sequence spans 445 residues: Enolase 2 (445 aa).

Residues His-164 and Glu-173 each contribute to the substrate site. Glu-216 (proton donor) is an active-site residue. Asp-251, Glu-301, and Asp-328 together coordinate Mg(2+). Positions 301 and 328 each coordinate substrate. The active-site Proton acceptor is the Lys-353. Residues 380-383 (SHRS) and Lys-404 contribute to the substrate site.

The protein belongs to the enolase family. In terms of assembly, homodimer. Mg(2+) is required as a cofactor.

The protein localises to the cytoplasm. It carries out the reaction (2R)-2-phosphoglycerate = phosphoenolpyruvate + H2O. Its pathway is carbohydrate degradation; glycolysis; pyruvate from D-glyceraldehyde 3-phosphate: step 4/5. This chain is Enolase 2 (ENO2), found in Hevea brasiliensis (Para rubber tree).